The following is a 620-amino-acid chain: MSEHVEPAAPGPGPNGGGGGPAPARGPRTPNLNPNPLINVRDRLFHALFFKMAVTYSRLFPPAFRRLFEFFVLLKALFVLFVLAYIHIVFSRSPINCLEHVRDKWPREGILRVEVRHNSSRAPVFLQFCDSGGRGSFPGLAVEPGSNLDMEDEEEEELTMEMFGNSSIKFELDIEPKVFKPPSSTEALNDSQEFPFPETPTKVWPQDEYIVEYSLEYGFLRLSQATRQRLSIPVMVVTLDPTRDQCFGDRFSRLLLDEFLGYDDILMSSVKGLAENEENKGFLRNVVSGEHYRFVSMWMARTSYLAAFAIMVIFTLSVSMLLRYSHHQIFVFIVDLLQMLEMNMAIAFPAAPLLTVILALVGMEAIMSEFFNDTTTAFYIILIVWLADQYDAICCHTSTSKRHWLRFFYLYHFAFYAYHYRFNGQYSSLALVTSWLFIQHSMIYFFHHYELPAILQQVRIQEMLLQAPPLGPGTPTALPDDMNNNSGAPATAPDSAGQPPALGPVSPGASGSPGPVAAAPSSLVAAAASVAAAAGGDLGWMAETAAIITDASFLSGLSASLLERRPASPLGPAGGLPHAPQDSVPPSDSAASDTTPLGAAVGGPSPASMAPTEAPSEVGS.

The disordered stretch occupies residues 1–33 (MSEHVEPAAPGPGPNGGGGGPAPARGPRTPNLN). Ser-2 bears the N-acetylserine mark. Low complexity predominate over residues 22 to 31 (APARGPRTPN). Thr-29 is subject to Phosphothreonine. Residues 70–90 (FFVLLKALFVLFVLAYIHIVF) form a helical membrane-spanning segment. An N-linked (GlcNAc...) asparagine glycan is attached at Asn-189. 3 consecutive transmembrane segments (helical) span residues 302–322 (TSYL…SMLL), 346–366 (IAFP…MEAI), and 426–446 (YSSL…IYFF). Disordered regions lie at residues 474–517 (TPTA…GPVA) and 568–620 (SPLG…EVGS). 2 stretches are compositionally biased toward low complexity: residues 499 to 517 (PPAL…GPVA) and 568 to 593 (SPLG…AASD).

This sequence belongs to the membralin family. Interacts with ERLIN2.

The protein resides in the endoplasmic reticulum membrane. Its function is as follows. May have a role in the ERAD pathway required for clearance of misfolded proteins in the endoplasmic reticulum (ER). Promotes survival of motor neurons, probably by protecting against ER stress. This is Membralin (TMEM259) from Homo sapiens (Human).